The chain runs to 639 residues: UPF0313 protein CLJ_B0249 (639 aa).

The Radical SAM core domain maps to Ala295–Ser566. Cys309, Cys313, and Cys316 together coordinate [4Fe-4S] cluster. Residues Tyr597 to Lys639 form a disordered region. Basic residues-rich tracts occupy residues Pro600–Ala610 and Lys626–Lys639.

This sequence belongs to the UPF0313 family. Requires [4Fe-4S] cluster as cofactor.

This chain is UPF0313 protein CLJ_B0249, found in Clostridium botulinum (strain 657 / Type Ba4).